Reading from the N-terminus, the 158-residue chain is Toxin Tse2 (158 aa).

Forms a heterotetramer with Tsi2 consisting of two Tse2 dimers and two Tsi2 dimers. Formation of the complex inactivates Tse2 enzymatic activity.

The protein resides in the secreted. Functionally, toxin secreted by the H1 type VI (H1-T6SS) secretion system into the cytoplasm of recipient cells. Acts likely as a NAD-dependent cytotoxin towards both prokaryotic and eukaryotic cells. This chain is Toxin Tse2, found in Pseudomonas aeruginosa (strain ATCC 15692 / DSM 22644 / CIP 104116 / JCM 14847 / LMG 12228 / 1C / PRS 101 / PAO1).